We begin with the raw amino-acid sequence, 158 residues long: MGFIIAIAKRFDALVGPGVMLLYPLYASFRAIESPTMLDDQQWLTYWIIYSLITIFELSVWRVLAWLPFWPYLKLLFCMWLVLPMFSGAAYIYSNFVRQYVKIGMNVGGGTNYTDEQRRVLQMMSLDARKSVQDYVDRFGWDSVEKAIKAAEKETRKH.

The next 3 helical transmembrane spans lie at 2–22, 41–61, and 63–83; these read GFII…VMLL, QQWL…LSVW, and VLAW…WLVL.

It belongs to the DP1 family.

Its subcellular location is the membrane. The protein is HVA22-like protein f (HVA22F) of Arabidopsis thaliana (Mouse-ear cress).